Reading from the N-terminus, the 2193-residue chain is Protein sidekick-1 (2193 aa).

The segment covering 1–23 has biased composition (low complexity); it reads MARARPSVAGGGVAAPPERAGPG. The segment at 1 to 56 is disordered; it reads MARARPSVAGGGVAAPPERAGPGRPRRSRTGHHCDPECPGLRAAPRTPGPGAGRRA. 5 consecutive Ig-like C2-type domains span residues 86 to 168, 173 to 259, 275 to 363, 368 to 458, and 462 to 551; these read PYFK…SEIQ, GNFM…SPFI, PIIV…AFLS, PYFT…LDVT, and PAFT…AMLT. Cysteines 108 and 151 form a disulfide. N-linked (GlcNAc...) asparagine glycosylation is found at Asn-123, Asn-253, and Asn-283. 3 disulfide bridges follow: Cys-297-Cys-344, Cys-390-Cys-440, and Cys-483-Cys-535. Asn-532, Asn-545, and Asn-554 each carry an N-linked (GlcNAc...) asparagine glycan. The 90-residue stretch at 556–645 folds into the Ig-like C2-type 6 domain; that stretch reads TSIVHPPEDR…GSDSRTARLE (90 aa). An intrachain disulfide couples Cys-577 to Cys-629. Fibronectin type-III domains lie at 652–748, 753–849, 854–952, 956–1050, 1054–1153, 1158–1256, 1261–1358, 1362–1456, 1461–1558, 1563–1681, 1686–1782, 1786–1881, and 1884–1982; these read PPQN…LPEE, PPKN…TLQG, PPQN…THED, AVGH…VPPD, APSN…TLQA, APTS…TRES, APEN…TKDD, PPVR…TEKR, PPRE…TLQD, PPGS…VGEA, APQN…THQA, PPSF…AGPA, and SPGS…SAQA. N-linked (GlcNAc...) asparagine glycans are attached at residues Asn-764, Asn-803, Asn-864, Asn-997, and Asn-1006. 2 N-linked (GlcNAc...) asparagine glycosylation sites follow: Asn-1264 and Asn-1315. N-linked (GlcNAc...) asparagine glycosylation is found at Asn-1636, Asn-1730, Asn-1801, and Asn-1875. A helical membrane pass occupies residues 1992–2012; sequence FLLVMALSSLLLILLVVFVLV. Over 2013-2193 the chain is Cytoplasmic; the sequence is LHGQSKKYKS…APLTGFSSFV (181 aa). The disordered stretch occupies residues 2057–2080; that stretch reads STFSKKNGTRSPPRPSPGGLHYSD. Positions 2187–2193 match the PDZ-binding motif; sequence TGFSSFV.

Belongs to the sidekick family. Homodimer; mediates homophilic interactions to promote cell adhesion. Interacts (via PDZ-binding motif) with MAGI1, MAGI2, DLG2, DLG3 and DLG4. As to quaternary structure, does not mediate homophilic interactions. Expressed by non-overlapping subsets of retinal neurons. Sdk1 and Sdk2 are expressed in non-overlapping subsets of interneurons and retinal ganglion cells (RGCs) that form synapses in distinct inner plexiform layer (IPL) sublaminae (at protein level).

The protein localises to the cell membrane. Its subcellular location is the synapse. In terms of biological role, adhesion molecule that promotes lamina-specific synaptic connections in the retina. Expressed in specific subsets of interneurons and retinal ganglion cells (RGCs) and promotes synaptic connectivity via homophilic interactions. This Mus musculus (Mouse) protein is Protein sidekick-1.